The sequence spans 953 residues: Translation initiation factor IF-2 (953 aa).

The segment at 55–340 (GVTTEAPAAS…KSKRQKRNEY (286 aa)) is disordered. The span at 81 to 93 (KPAATPQQAAKPA) shows a compositional bias: low complexity. Pro residues predominate over residues 110-119 (PKPAAKPVPK). 2 stretches are compositionally biased toward low complexity: residues 123–133 (SAAKAESSAPK) and 143–160 (KPAAQSSTTATPGSMPRP). The segment covering 202 to 219 (PGGGPRPGGNRPQGGQGG) has biased composition (gly residues). Positions 233-248 (QPRPQGGSRSQQSGGQ) are enriched in low complexity. The span at 280–323 (NGRGGAGGQGGRPGFGGGRPGGGGSAGGRGGRRGGTAGAFGRPG) shows a compositional bias: gly residues. Over residues 327-336 (RKGRKSKRQK) the composition is skewed to basic residues. Residues 449–621 (KRPPVVTVMG…VLLTADASLD (173 aa)) form the tr-type G domain. A G1 region spans residues 458–465 (GHVDHGKT). 458-465 (GHVDHGKT) serves as a coordination point for GTP. Residues 483-487 (GITQG) are G2. Residues 508–511 (DTPG) are G3. Residues 508-512 (DTPGH) and 562-565 (NKID) each bind GTP. Residues 562–565 (NKID) are G4. Positions 598–600 (SAK) are G5.

The protein belongs to the TRAFAC class translation factor GTPase superfamily. Classic translation factor GTPase family. IF-2 subfamily.

It localises to the cytoplasm. Functionally, one of the essential components for the initiation of protein synthesis. Protects formylmethionyl-tRNA from spontaneous hydrolysis and promotes its binding to the 30S ribosomal subunits. Also involved in the hydrolysis of GTP during the formation of the 70S ribosomal complex. The polypeptide is Translation initiation factor IF-2 (Corynebacterium diphtheriae (strain ATCC 700971 / NCTC 13129 / Biotype gravis)).